Here is a 1178-residue protein sequence, read N- to C-terminus: MDNSVHNNSNTTHPDKSRASIVNGVREERVSLSTEPPAGVKGGDNGPITVGDYNKLESRLQGAGMEDSVDELQHITDDVMPLSLLLSRLAQFSHLKLQELILDLASKPLPENTLNGNAKGSMNSSINGNVNAGVNGVPKLPSPALEDTSPESLNKKTMILKFIQDLHSRWVKALVITEWARNADEVGKLIDLRTHLAAKLELYNRAFWNMVNLKHEMAFAKVPSPDLKTALEVLSTGAVHWMPDFGYLPKPPLTTQETLHWLNEIEVVLHMRLQLHEYEQIPEPWKEYKIDNGRVTFTVPGEFEVDLTISDEDFDKQFWFLDYRTIFSPSPSKLSDGARGFIEARVNTILETEGLLGCYKYLHELTLTTKIGEFARQAVELSRTGLWTQTLRVERLNRALGIQYWSQSLHTQDSQSWILLGVHSGKSSDGADDPSSPSRLMLQWFRDGKEVKDADIPLDTDTISTEKLLMTVISRHIKYLLSSIYNSLSSKPRYAQKRGRLSLRISDPPHLDCALTMQTLGADHAVLGIGPWSGNFFFADRPPFGVGWANKINTLRNPVTEAPVVLEQLRWYHMTLHLRTLPKPADWKVLPKAPVPLDEVKRVVYSRASTTREPFHAIFLRNSRWTPQWFAMMSLSLGGDRWWTAEGHGIPGLRINIFTELSITPTDLLLPSSPLFSKLTQHATNIMDQIHDFRVLHQQHIQYTARKASPDGHRTTVVLSADMLPLQPDPDGTTQPTWAGRFIQLDYKGPAPITPSEYRESLADPKSVRRQPTRQKVMIEATVGVLHPTKFRLLRHRLDRDVLYDRRLGHFTLRFQPASGAGIIPLLRSRVQSLDRLVDIVDALHLRGKQISPKKITLREIVFSYGNGSPTMSLSNPRPKFGGNKQRSWEVRLNLAAEQGVDVILEAGNPHLRAIDYLRSAANSVHLKKLPAWFVFTLPLYEALEQLHDSWDAILAKDLGTCYVFHKSLDWLTIRFALSGAKNRLVQLDIRPRDRNGHINWHISRAKTDPNINNENDEFNKILKQRVWSISGNGFKGLGNSATAQWDHGIGPLLAVINEALQSLAGTPPPPQVPTQIQQPQQPSPHPQQAQVQEQRQQPQQQQQANPLQGAAVPGRFPHQLQQGQQLSYQQQARLQQQQRQQQQQQQQQQHMHNQNQAQQAQQRAAMNDINTPVVVLD.

The segment covering 1–12 has biased composition (polar residues); that stretch reads MDNSVHNNSNTT. 2 disordered regions span residues 1–50 and 1064–1178; these read MDNS…PITV and LAGT…VVLD. 2 stretches are compositionally biased toward low complexity: residues 1074–1112 and 1119–1164; these read PTQI…QGAA and HQLQ…AQQR.

It belongs to the Mediator complex subunit 14 family. Component of the Mediator complex.

Its subcellular location is the nucleus. Component of the Mediator complex, a coactivator involved in the regulated transcription of nearly all RNA polymerase II-dependent genes. Mediator functions as a bridge to convey information from gene-specific regulatory proteins to the basal RNA polymerase II transcription machinery. Mediator is recruited to promoters by direct interactions with regulatory proteins and serves as a scaffold for the assembly of a functional preinitiation complex with RNA polymerase II and the general transcription factors. In Chaetomium globosum (strain ATCC 6205 / CBS 148.51 / DSM 1962 / NBRC 6347 / NRRL 1970) (Soil fungus), this protein is Mediator of RNA polymerase II transcription subunit 14 (RGR1).